Here is a 1041-residue protein sequence, read N- to C-terminus: RAS protein activator like-3 (1041 aa).

The interval 1–59 is disordered; it reads MKPECGQTMFRTFWSRSRDSSAMDPPLQSEEDSQTQPSLPSPLTSYRWHTGGSGEKAAG. Polar residues predominate over residues 34–44; it reads QTQPSLPSPLT. A phosphoserine mark is found at Ser-41, Ser-74, Ser-187, Ser-189, Ser-190, Ser-193, Ser-239, Ser-252, Ser-256, and Ser-259. Residues 218-243 are a coiled coil; that stretch reads SNQVHNVRKLLKRLKEKKRAKSELGA. The PH domain occupies 220–321; the sequence is QVHNVRKLLK…WIEDLRRQFQ (102 aa). The tract at residues 234–256 is disordered; sequence KKRAKSELGAYTPRDGPPSALGS. Thr-262 is subject to Phosphothreonine. Residues 312–430 enclose the C2 domain; sequence WIEDLRRQFQ…APAAGLERWF (119 aa). One can recognise a Ras-GAP domain in the interval 500–708; sequence GRAQALVTDL…PAMQHFLDQV (209 aa). The segment at 790–910 is disordered; that stretch reads GEKPGFLAPR…PGDRYQTTGT (121 aa). Ser-813 and Ser-816 each carry phosphoserine. The span at 850–866 shows a compositional bias: basic residues; sequence RPTHRRPSAGSKPRPKG. Residues 931 to 1013 adopt a coiled-coil conformation; that stretch reads QKALSLLVES…LRDSLQSLQL (83 aa). Residues 1016-1041 form a disordered region; that stretch reads KTPGSRSQPLPLKAPCVNGADLSMGT.

In terms of tissue distribution, predominantly expressed in hematopoietic tissues.

The protein resides in the cytoplasm. It is found in the cell cortex. Functionally, functions as a Ras GTPase-activating protein. Plays an important role in the expansion and functions of natural killer T (NKT) cells in the liver by negatively regulating RAS activity and the down-stream ERK signaling pathway. This Mus musculus (Mouse) protein is RAS protein activator like-3 (Rasal3).